A 294-amino-acid polypeptide reads, in one-letter code: Small ribosomal subunit protein uS2 (294 aa).

Over residues 232-245 (RAAEQDKAADDKAQ) the composition is skewed to basic and acidic residues. The tract at residues 232–294 (RAAEQDKAAD…GSEEDGEAAN (63 aa)) is disordered. The segment covering 246–265 (EQAAAEAAKPEPAAPAPAAE) has biased composition (low complexity).

The protein belongs to the universal ribosomal protein uS2 family.

This chain is Small ribosomal subunit protein uS2, found in Desulfatibacillum aliphaticivorans.